The sequence spans 394 residues: Acryloyl-CoA reductase (NADH) (394 aa).

FAD-binding positions include 135-144 (FALTEPNAGS) and 170-172 (FIS). Serine 144 is a substrate binding site. Substrate is bound at residue 254–257 (DGAR). FAD contacts are provided by residues arginine 282, glutamine 293, and 350–354 (QIHGG). Glutamate 377 acts as the Proton acceptor in catalysis. Glycine 378 provides a ligand contact to substrate. 379 to 381 (TSE) is an FAD binding site.

As to quaternary structure, heterohexadecamer; tetramer of tetramers. Each tetramer is composed of 2 alpha (AcrC), a beta (AcrA) and a gamma (AcrB) subunit. The cofactor is FAD.

The protein resides in the cytoplasm. It catalyses the reaction propanoyl-CoA + NAD(+) = acryloyl-CoA + NADH + H(+). Functionally, probable catalytic subunit of the acryloyl-CoA reductase complex involved in the pathway of L-alanine fermentation. Catalyzes the irreversible NADH-dependent formation of propionyl-CoA from acryloyl-CoA. It can also use 3-buten-2-one as substrate. The polypeptide is Acryloyl-CoA reductase (NADH) (acrC) (Anaerotignum propionicum (Clostridium propionicum)).